Reading from the N-terminus, the 643-residue chain is DNA polymerase III subunit tau (643 aa).

45–52 (GTRGVGKT) contributes to the ATP binding site. Cysteine 64, cysteine 73, cysteine 76, and cysteine 79 together coordinate Zn(2+). The segment at 385-404 (TPTQVPPQPQSAPQQAPTVP) is disordered.

The protein belongs to the DnaX/STICHEL family. The DNA polymerase III holoenzyme complex contains at least 10 different subunits organized into 3 functionally essential subassemblies: the Pol III core, the beta sliding clamp processivity factor and the clamp-loading complex. The Pol III core (subunits alpha, epsilon and theta) contains the polymerase and the 3'-5' exonuclease proofreading activities. The polymerase is tethered to the template via the dimeric beta sliding clamp processivity factor. The clamp-loading complex (also called gamma complex) assembles the beta sliding clamp onto the primed template and plays a central role in the organization and communication at the replication fork. The clamp-loading complex contains delta, delta', psi and chi, and 3 copies of either or both of two different DnaX proteins, gamma and tau. The DNA replisome complex has a single clamp loader (3 tau and 1 each of delta, delta', psi and chi subunits) which binds 3 Pol III cores (1 core on the leading strand and 2 on the lagging strand) each with a beta sliding clamp dimer. Additional proteins in the replisome are other copies of gamma, psi and chi, Ssb, DNA helicase and RNA primase. The clamp loader hydrolyzes ATP to assemble the beta processivity factor onto the primed template and plays a central role in the organization and communication at the replication fork; the minimal complex to load the beta sliding clamp on DNA is delta, delta', gamma.

It carries out the reaction DNA(n) + a 2'-deoxyribonucleoside 5'-triphosphate = DNA(n+1) + diphosphate. In terms of biological role, part of the beta sliding clamp loading complex, which hydrolyzes ATP to load the beta clamp onto primed DNA to form the DNA replication pre-initiation complex. DNA polymerase III is a complex, multichain enzyme responsible for most of the replicative synthesis in bacteria. This DNA polymerase also exhibits 3'-5' exonuclease activity. The gamma complex (gamma(3),delta,delta') is thought to load beta dimers onto DNA by binding ATP which alters the complex's conformation so it can bind beta sliding clamp dimers and open them at one interface. Primed DNA is recognized, ATP is hydrolyzed releasing the gamma complex and closing the beta sliding clamp ring around the primed DNA. Functionally, serves as a scaffold to trimerize the core complex. Its function is as follows. Interacts with the delta and delta' subunits to transfer the beta subunit on the DNA. Interacts with ATP, drives ATP-induced conformational changes in the gamma complex that opens the beta sliding clamp ring. After loading of primed DNA ATP is hydrolyzed and the beta sliding clamp ring closes. This is DNA polymerase III subunit tau (dnaX) from Escherichia coli (strain K12).